The primary structure comprises 269 residues: Putative pyruvate, phosphate dikinase regulatory protein (269 aa).

151 to 158 (GISRTSKT) contributes to the ADP binding site.

The protein belongs to the pyruvate, phosphate/water dikinase regulatory protein family. PDRP subfamily.

The catalysed reaction is N(tele)-phospho-L-histidyl/L-threonyl-[pyruvate, phosphate dikinase] + ADP = N(tele)-phospho-L-histidyl/O-phospho-L-threonyl-[pyruvate, phosphate dikinase] + AMP + H(+). It catalyses the reaction N(tele)-phospho-L-histidyl/O-phospho-L-threonyl-[pyruvate, phosphate dikinase] + phosphate + H(+) = N(tele)-phospho-L-histidyl/L-threonyl-[pyruvate, phosphate dikinase] + diphosphate. In terms of biological role, bifunctional serine/threonine kinase and phosphorylase involved in the regulation of the pyruvate, phosphate dikinase (PPDK) by catalyzing its phosphorylation/dephosphorylation. The chain is Putative pyruvate, phosphate dikinase regulatory protein from Staphylococcus aureus.